We begin with the raw amino-acid sequence, 339 residues long: Glyceraldehyde-3-phosphate dehydrogenase (339 aa).

Residues 12–13 (RI), aspartate 39, arginine 84, and serine 127 contribute to the NAD(+) site. Residues 157–159 (SCT), threonine 188, arginine 203, 216–217 (TG), and arginine 239 contribute to the D-glyceraldehyde 3-phosphate site. The active-site Nucleophile is cysteine 158. Position 320 (asparagine 320) interacts with NAD(+).

This sequence belongs to the glyceraldehyde-3-phosphate dehydrogenase family. As to quaternary structure, homotetramer.

The protein localises to the cytoplasm. The catalysed reaction is D-glyceraldehyde 3-phosphate + phosphate + NAD(+) = (2R)-3-phospho-glyceroyl phosphate + NADH + H(+). Its pathway is carbohydrate degradation; glycolysis; pyruvate from D-glyceraldehyde 3-phosphate: step 1/5. Functionally, catalyzes the oxidative phosphorylation of glyceraldehyde 3-phosphate (G3P) to 1,3-bisphosphoglycerate (BPG) using the cofactor NAD. The first reaction step involves the formation of a hemiacetal intermediate between G3P and a cysteine residue, and this hemiacetal intermediate is then oxidized to a thioester, with concomitant reduction of NAD to NADH. The reduced NADH is then exchanged with the second NAD, and the thioester is attacked by a nucleophilic inorganic phosphate to produce BPG. This chain is Glyceraldehyde-3-phosphate dehydrogenase (gap), found in Mycobacterium bovis (strain ATCC BAA-935 / AF2122/97).